A 259-amino-acid polypeptide reads, in one-letter code: Phosphoadenosine 5'-phosphosulfate reductase (259 aa).

The active-site Nucleophile; cysteine thiosulfonate intermediate is the Cys-244.

Belongs to the PAPS reductase family. CysH subfamily.

The protein localises to the cytoplasm. It catalyses the reaction [thioredoxin]-disulfide + sulfite + adenosine 3',5'-bisphosphate + 2 H(+) = [thioredoxin]-dithiol + 3'-phosphoadenylyl sulfate. The protein operates within sulfur metabolism; hydrogen sulfide biosynthesis; sulfite from sulfate: step 3/3. In terms of biological role, catalyzes the formation of sulfite from phosphoadenosine 5'-phosphosulfate (PAPS) using thioredoxin as an electron donor. The polypeptide is Phosphoadenosine 5'-phosphosulfate reductase (Vibrio parahaemolyticus serotype O3:K6 (strain RIMD 2210633)).